Consider the following 185-residue polypeptide: Ribonuclease HII (185 aa).

The region spanning 1–185 (MIILGIDEAG…KSYKPIQLLL (185 aa)) is the RNase H type-2 domain. 3 residues coordinate a divalent metal cation: aspartate 7, glutamate 8, and aspartate 99.

It belongs to the RNase HII family. The cofactor is Mn(2+). Mg(2+) serves as cofactor.

The protein resides in the cytoplasm. The enzyme catalyses Endonucleolytic cleavage to 5'-phosphomonoester.. Endonuclease that specifically degrades the RNA of RNA-DNA hybrids. This Francisella philomiragia subsp. philomiragia (strain ATCC 25017 / CCUG 19701 / FSC 153 / O#319-036) protein is Ribonuclease HII.